Here is a 189-residue protein sequence, read N- to C-terminus: ATP-dependent protease subunit HslV (189 aa).

Threonine 12 is an active-site residue. 3 residues coordinate Na(+): serine 172, cysteine 175, and threonine 178.

This sequence belongs to the peptidase T1B family. HslV subfamily. A double ring-shaped homohexamer of HslV is capped on each side by a ring-shaped HslU homohexamer. The assembly of the HslU/HslV complex is dependent on binding of ATP.

It localises to the cytoplasm. It catalyses the reaction ATP-dependent cleavage of peptide bonds with broad specificity.. Allosterically activated by HslU binding. Protease subunit of a proteasome-like degradation complex believed to be a general protein degrading machinery. This Ehrlichia chaffeensis (strain ATCC CRL-10679 / Arkansas) protein is ATP-dependent protease subunit HslV.